Here is a 76-residue protein sequence, read N- to C-terminus: Sec-independent protein translocase protein TatA (76 aa).

Residues 1-21 (MGGISITQLLIIVAIVVLLFG) form a helical membrane-spanning segment. Positions 45–76 (DDNKEKDAEFKSLSDDSETTAKTEKAKDKEQA) are disordered.

This sequence belongs to the TatA/E family. As to quaternary structure, the Tat system comprises two distinct complexes: a TatABC complex, containing multiple copies of TatA, TatB and TatC subunits, and a separate TatA complex, containing only TatA subunits. Substrates initially bind to the TatABC complex, which probably triggers association of the separate TatA complex to form the active translocon.

The protein localises to the cell inner membrane. Functionally, part of the twin-arginine translocation (Tat) system that transports large folded proteins containing a characteristic twin-arginine motif in their signal peptide across membranes. TatA could form the protein-conducting channel of the Tat system. This is Sec-independent protein translocase protein TatA from Pasteurella multocida (strain Pm70).